Reading from the N-terminus, the 206-residue chain is Ribosomal RNA small subunit methyltransferase G (206 aa).

S-adenosyl-L-methionine-binding positions include G73, L78, V124–E125, and R139.

It belongs to the methyltransferase superfamily. RNA methyltransferase RsmG family.

The protein resides in the cytoplasm. The enzyme catalyses guanosine(527) in 16S rRNA + S-adenosyl-L-methionine = N(7)-methylguanosine(527) in 16S rRNA + S-adenosyl-L-homocysteine. Specifically methylates the N7 position of guanine in position 527 of 16S rRNA. This Yersinia enterocolitica serotype O:8 / biotype 1B (strain NCTC 13174 / 8081) protein is Ribosomal RNA small subunit methyltransferase G.